A 166-amino-acid polypeptide reads, in one-letter code: 6,7-dimethyl-8-ribityllumazine synthase (166 aa).

5-amino-6-(D-ribitylamino)uracil contacts are provided by residues W31, 63–65 (SFE), and 85–87 (VII). 90-91 (GT) contacts (2S)-2-hydroxy-3-oxobutyl phosphate. H93 (proton donor) is an active-site residue. F118 lines the 5-amino-6-(D-ribitylamino)uracil pocket. (2S)-2-hydroxy-3-oxobutyl phosphate is bound at residue R132.

It belongs to the DMRL synthase family.

The catalysed reaction is (2S)-2-hydroxy-3-oxobutyl phosphate + 5-amino-6-(D-ribitylamino)uracil = 6,7-dimethyl-8-(1-D-ribityl)lumazine + phosphate + 2 H2O + H(+). It participates in cofactor biosynthesis; riboflavin biosynthesis; riboflavin from 2-hydroxy-3-oxobutyl phosphate and 5-amino-6-(D-ribitylamino)uracil: step 1/2. Functionally, catalyzes the formation of 6,7-dimethyl-8-ribityllumazine by condensation of 5-amino-6-(D-ribitylamino)uracil with 3,4-dihydroxy-2-butanone 4-phosphate. This is the penultimate step in the biosynthesis of riboflavin. In Cutibacterium acnes (strain DSM 16379 / KPA171202) (Propionibacterium acnes), this protein is 6,7-dimethyl-8-ribityllumazine synthase.